A 338-amino-acid polypeptide reads, in one-letter code: Probable tRNA pseudouridine synthase B (338 aa).

Asp78 (nucleophile) is an active-site residue. The PUA domain maps to 245 to 320; it reads LPKIILRDSA…IAASPIRVLM (76 aa).

Belongs to the pseudouridine synthase TruB family. Type 2 subfamily.

It catalyses the reaction uridine(55) in tRNA = pseudouridine(55) in tRNA. In terms of biological role, could be responsible for synthesis of pseudouridine from uracil-55 in the psi GC loop of transfer RNAs. The polypeptide is Probable tRNA pseudouridine synthase B (Methanosarcina mazei (strain ATCC BAA-159 / DSM 3647 / Goe1 / Go1 / JCM 11833 / OCM 88) (Methanosarcina frisia)).